Here is a 494-residue protein sequence, read N- to C-terminus: MNPKVEYKQIQSHDEAENQVLQHECHQAKARKYYRCAVVIAIIITLLFCVLASQLLLFPLFSITSQTTTEIVLNKDIQCDDQCRFVLVESIPEGLVYDANATINPSIFQSWLNILTSAKSSVDIASFYWTLTNEDTQTQEPSAHQGELILQELLNLKQRGVSVRVAVNPPDSPLRAKDISALKDSGADVRVVDLPKLTDGVLHTKFWVVDSEHFYIGSANMDWRSLTQVKELGATIYNCSCLAEDLKKIFEAYWILGLPNATLPSPWPVNYSTPYNKDTPMQVMLNSTASQVYISSSPPPLSATGRTDDLQSIINIIDDAKKFVYISVMDYSPTEEFSHPRRYWPYIDNHLRKAVYERNVNVRLLISCWQNSRPSMFTFLRSLAALHSNKSHYNIEVKIFVVPATEVQKKIPYARVNHNKYMVTDRVAYIGTSNWSGDYFIHTAGSALIVNQTQSVGTSDTIQMQLQAVFERDWNSNYSRTFNTLSSWKEKCIF.

The Cytoplasmic portion of the chain corresponds to 1-37 (MNPKVEYKQIQSHDEAENQVLQHECHQAKARKYYRCA). The chain crosses the membrane as a helical; Signal-anchor for type II membrane protein span at residues 38 to 58 (VVIAIIITLLFCVLASQLLLF). The Lumenal portion of the chain corresponds to 59–494 (PLFSITSQTT…LSSWKEKCIF (436 aa)). Asn100 carries an N-linked (GlcNAc...) asparagine glycan. The PLD phosphodiesterase 1 domain occupies 198–225 (TDGVLHTKFWVVDSEHFYIGSANMDWRS). Catalysis depends on residues His203, Lys205, and Asp210. Asn238, Asn260, Asn270, Asn286, and Asn389 each carry an N-linked (GlcNAc...) asparagine glycan. The 27-residue stretch at 413–439 (YARVNHNKYMVTDRVAYIGTSNWSGDY) folds into the PLD phosphodiesterase 2 domain. Catalysis depends on residues His418, Lys420, and Asp425. N-linked (GlcNAc...) asparagine glycans are attached at residues Asn434, Asn451, and Asn477.

Belongs to the phospholipase D family. N-glycosylated. Post-translationally, proteolytically processed to a soluble form that is stable within endosomes and lysosomes. During transport through the secretory pathway becomes proteolysed by cysteine proteases, thereby releasing a stable soluble lysosomal lumenal polypeptide, whereas the transmembrane-bound fragment is rapidly degraded. Its transport route to lysosomes involves ubiquitination and the ESCRT complex. In terms of processing, ubiquitinated. Ubiquitination mediates sorting into lysosomes.

The protein localises to the endoplasmic reticulum membrane. It localises to the lysosome lumen. It is found in the early endosome membrane. Its subcellular location is the late endosome membrane. The protein resides in the golgi apparatus membrane. The protein localises to the endosome membrane. It carries out the reaction Exonucleolytic cleavage in the 5'- to 3'-direction to yield nucleoside 3'-phosphates.. 5'-&gt;3' DNA exonuclease which digests single-stranded DNA (ssDNA). Regulates inflammatory cytokine responses via the degradation of nucleic acids, by reducing the concentration of ssDNA able to stimulate TLR9, a nucleotide-sensing receptor in collaboration with PLD4. May be important in myotube formation. Plays a role in lysosomal homeostasis. Involved in the regulation of endosomal protein sorting. In Xenopus tropicalis (Western clawed frog), this protein is 5'-3' exonuclease PLD3 (pld3).